The primary structure comprises 352 residues: Quinolinate synthase (352 aa).

Residues His-48 and Ser-69 each contribute to the iminosuccinate site. Cys-114 serves as a coordination point for [4Fe-4S] cluster. Iminosuccinate-binding positions include 140–142 and Ser-157; that span reads YAN. Residue Cys-201 participates in [4Fe-4S] cluster binding. Iminosuccinate-binding positions include 227–229 and Thr-244; that span reads HPE. Residue Cys-298 coordinates [4Fe-4S] cluster.

Belongs to the quinolinate synthase family. Type 1 subfamily. It depends on [4Fe-4S] cluster as a cofactor.

It localises to the cytoplasm. The catalysed reaction is iminosuccinate + dihydroxyacetone phosphate = quinolinate + phosphate + 2 H2O + H(+). The protein operates within cofactor biosynthesis; NAD(+) biosynthesis; quinolinate from iminoaspartate: step 1/1. In terms of biological role, catalyzes the condensation of iminoaspartate with dihydroxyacetone phosphate to form quinolinate. This chain is Quinolinate synthase, found in Pseudomonas syringae pv. syringae (strain B728a).